The sequence spans 805 residues: Leucine--tRNA ligase (805 aa).

The short motif at P41–H52 is the 'HIGH' region element. A 'KMSKS' region motif is present at residues K577–S581. ATP is bound at residue K580.

It belongs to the class-I aminoacyl-tRNA synthetase family.

It is found in the cytoplasm. It catalyses the reaction tRNA(Leu) + L-leucine + ATP = L-leucyl-tRNA(Leu) + AMP + diphosphate. In Staphylococcus aureus (strain USA300), this protein is Leucine--tRNA ligase.